A 448-amino-acid polypeptide reads, in one-letter code: Fibulin-5 (448 aa).

An N-terminal signal peptide occupies residues 1 to 23 (MPGIKRILTVTILALCLPSPGNA). Positions 42 to 82 (DIDECRTIPEACRGDMMCVNQNGGYLCIPRTNPVYRGPYSN) constitute an EGF-like 1; calcium-binding domain. 17 disulfides stabilise this stretch: cysteine 46–cysteine 59, cysteine 53–cysteine 68, cysteine 131–cysteine 144, cysteine 138–cysteine 153, cysteine 155–cysteine 166, cysteine 172–cysteine 181, cysteine 177–cysteine 190, cysteine 192–cysteine 205, cysteine 211–cysteine 221, cysteine 217–cysteine 230, cysteine 232–cysteine 245, cysteine 251–cysteine 262, cysteine 258–cysteine 271, cysteine 273–cysteine 286, cysteine 292–cysteine 305, cysteine 299–cysteine 314, and cysteine 320–cysteine 332. The short motif at 54–56 (RGD) is the Cell attachment site element. The EGF-like 2; calcium-binding domain maps to 127-167 (DVDECATDSHQCNPTQICINTEGGYTCSCTDGYWLLEGQCL). The region spanning 168–206 (DIDECRYGYCQQLCANVPGSYSCTCNPGFTLNEDGRSCQ) is the EGF-like 3; calcium-binding domain. The 40-residue stretch at 207–246 (DVNECATENPCVQTCVNTYGSFICRCDPGYELEEDGVHCS) folds into the EGF-like 4; calcium-binding domain. The segment at 245–448 (CSDMDECSFS…LRIYVSQYPF (204 aa)) is interaction with LOXL1. Positions 247–287 (DMDECSFSEFLCQHECVNQPGTYFCSCPPGYILLDDNRSCQ) constitute an EGF-like 5; calcium-binding domain. Asparagine 283 and asparagine 296 each carry an N-linked (GlcNAc...) asparagine glycan. The EGF-like 6; calcium-binding domain occupies 288 to 333 (DINECEHRNHTCNLQQTCYNLQGGFKCIDPIRCEEPYLRISDNRCM).

This sequence belongs to the fibulin family. As to quaternary structure, homodimer. Monomer, homodimerizes in presence of Ca(2+). Interacts with ELN. Interacts (via N-terminus) with the integrins ITGAV/ITGB3, ITGAV/ITGB5 and ITGA9/ITGB1. Interacts with FBN1 (via N-terminal domain). Forms a ternary complex with ELN and FBN1. Interacts with EFEMP2 with moderate affinity. Interacts with LOXL1. In terms of processing, N-glycosylated. Expressed in skin fibroblasts (at protein level). Expressed predominantly in heart, ovary, and colon but also in kidney, pancreas, testis, lung and placenta. Not detectable in brain, liver, thymus, prostate, or peripheral blood leukocytes.

The protein localises to the secreted. Its subcellular location is the extracellular space. It is found in the extracellular matrix. Its function is as follows. Essential for elastic fiber formation, is involved in the assembly of continuous elastin (ELN) polymer and promotes the interaction of microfibrils and ELN. Stabilizes and organizes elastic fibers in the skin, lung and vasculature. Promotes adhesion of endothelial cells through interaction of integrins and the RGD motif. Vascular ligand for integrin receptors which may play a role in vascular development and remodeling. May act as an adapter that mediates the interaction between FBN1 and ELN. The sequence is that of Fibulin-5 (FBLN5) from Homo sapiens (Human).